Consider the following 394-residue polypeptide: Probable tRNA sulfurtransferase (394 aa).

The THUMP domain occupies 61-168 (DETVATLSRI…PMINIYSEEI (108 aa)). ATP is bound by residues 185-186 (LL), 210-211 (YF), arginine 267, glycine 289, and glutamine 298.

The protein belongs to the ThiI family.

Its subcellular location is the cytoplasm. It catalyses the reaction [ThiI sulfur-carrier protein]-S-sulfanyl-L-cysteine + a uridine in tRNA + 2 reduced [2Fe-2S]-[ferredoxin] + ATP + H(+) = [ThiI sulfur-carrier protein]-L-cysteine + a 4-thiouridine in tRNA + 2 oxidized [2Fe-2S]-[ferredoxin] + AMP + diphosphate. It carries out the reaction [ThiS sulfur-carrier protein]-C-terminal Gly-Gly-AMP + S-sulfanyl-L-cysteinyl-[cysteine desulfurase] + AH2 = [ThiS sulfur-carrier protein]-C-terminal-Gly-aminoethanethioate + L-cysteinyl-[cysteine desulfurase] + A + AMP + 2 H(+). The protein operates within cofactor biosynthesis; thiamine diphosphate biosynthesis. Catalyzes the ATP-dependent transfer of a sulfur to tRNA to produce 4-thiouridine in position 8 of tRNAs, which functions as a near-UV photosensor. Also catalyzes the transfer of sulfur to the sulfur carrier protein ThiS, forming ThiS-thiocarboxylate. This is a step in the synthesis of thiazole, in the thiamine biosynthesis pathway. The sulfur is donated as persulfide by IscS. The polypeptide is Probable tRNA sulfurtransferase (Agathobacter rectalis (strain ATCC 33656 / DSM 3377 / JCM 17463 / KCTC 5835 / VPI 0990) (Eubacterium rectale)).